The chain runs to 42 residues: CAKKRNWCGKNEDCCCPMKCIYAWYNQQGSCQSTITGLFKKC.

4 disulfide bridges follow: Cys1–Cys15, Cys8–Cys20, Cys14–Cys31, and Cys16–Cys42.

Belongs to the neurotoxin 06 (delta-actx) family. As to expression, expressed by the venom gland.

It is found in the secreted. Functionally, inhibits tetrodotoxin-sensitive sodium channels by binding to site 3. It slows the inactivation, causes a prolongation of action potential duration resulting in repetitive firing in autonomic and motor nerve fibers. Does not depolarize the resting potential. Does not affect tetrodotoxin-resistant sodium channels. This lethal neurotoxin is active on both insect and mammalian voltage-gated sodium channels (Nav). In Illawarra wisharti (Illawarra funnel-web spider), this protein is Delta-hexatoxin-Iw1a.